A 185-amino-acid chain; its full sequence is Elongation factor P (185 aa).

This sequence belongs to the elongation factor P family.

It is found in the cytoplasm. The protein operates within protein biosynthesis; polypeptide chain elongation. Functionally, involved in peptide bond synthesis. Stimulates efficient translation and peptide-bond synthesis on native or reconstituted 70S ribosomes in vitro. Probably functions indirectly by altering the affinity of the ribosome for aminoacyl-tRNA, thus increasing their reactivity as acceptors for peptidyl transferase. This is Elongation factor P from Clostridium perfringens (strain ATCC 13124 / DSM 756 / JCM 1290 / NCIMB 6125 / NCTC 8237 / Type A).